We begin with the raw amino-acid sequence, 487 residues long: Histamine H1 receptor (487 aa).

Residues 1 to 29 lie on the Extracellular side of the membrane; the sequence is MSLPNSSCLLEDKMCESNKTTMASPQLMP. N-linked (GlcNAc...) asparagine glycans are attached at residues Asn-5 and Asn-18. A helical transmembrane segment spans residues 30–50; it reads LVVVLSTICLVTVGLNLLVLY. At 51-64 the chain is on the cytoplasmic side; that stretch reads AVRSERKLHTVGNL. The chain crosses the membrane as a helical span at residues 65-89; the sequence is YIVSLSVADLIVGAVVMPMNILYLL. Residues 90–97 lie on the Extracellular side of the membrane; sequence MSKWSLGR. The helical transmembrane segment at 98-123 threads the bilayer; that stretch reads PLCLFWLSMDYVASTASIFSVFILCI. The cysteines at positions 100 and 180 are disulfide-linked. Histamine-binding residues include Asp-107 and Thr-112. Residues 107–112 are important for agonist binding; sequence DYVAST. The Cytoplasmic portion of the chain corresponds to 124 to 144; that stretch reads DRYRSVQQPLRYLKYRTKTRA. 2 positions are modified to phosphothreonine: Thr-140 and Thr-142. Residues 145-164 form a helical membrane-spanning segment; it reads SATILGAWFLSFLWVIPILG. Residues 165–188 are Extracellular-facing; sequence WNHFMQQTSVRREDKCETDFYDVT. The helical transmembrane segment at 189-211 threads the bilayer; the sequence is WFKVMTAIINFYLPTLLMLWFYA. Histamine is bound at residue Asn-198. At 212-416 the chain is on the cytoplasmic side; that stretch reads KIYKAVRQHC…MNRERKAAKQ (205 aa). Position 230 is a phosphoserine (Ser-230). Residues 238 to 261 show a composition bias toward basic and acidic residues; it reads KLRPENPKGDAKKPGKESPWEVLK. The tract at residues 238–292 is disordered; it reads KLRPENPKGDAKKPGKESPWEVLKRKPKDAGGGSVLKSPSQTPKEMKSPVVFSQE. Thr-279 carries the phosphothreonine modification. 2 positions are modified to phosphoserine: Ser-344 and Ser-347. A disordered region spans residues 345 to 377; that stretch reads EISEDQMLGDSQSFSRTDSDTTTETASGKGKLR. Residues 353–370 are compositionally biased toward polar residues; the sequence is GDSQSFSRTDSDTTTETA. Ser-380, Ser-396, and Ser-398 each carry phosphoserine. A helical membrane pass occupies residues 417–440; it reads LGFIMAAFILCWIPYFIFFMVIAF. The important for agonist binding stretch occupies residues 424–428; sequence FILCW. Tyr-431 contacts histamine. Residues Cys-441 and Cys-444 are joined by a disulfide bond. The Extracellular segment spans residues 441-446; sequence CKNCCN. Residues 447–469 traverse the membrane as a helical segment; the sequence is EHLHMFTIWLGYINSTLNPLIYP. Over 470 to 487 the chain is Cytoplasmic; that stretch reads LCNENFKKTFKRILHIRS.

Belongs to the G-protein coupled receptor 1 family. Phosphorylation at sites in the second and third cytoplasmic loops independently contribute to agonist-induced receptor down-regulation.

It is found in the cell membrane. In terms of biological role, G-protein-coupled receptor for histamine, a biogenic amine that functions as an immune modulator and a neurotransmitter. Through the H1 receptor, histamine mediates the contraction of smooth muscles and increases capillary permeability due to contraction of terminal venules. Also mediates neurotransmission in the central nervous system and thereby regulates circadian rhythms, emotional and locomotor activities as well as cognitive functions. The sequence is that of Histamine H1 receptor from Gorilla gorilla gorilla (Western lowland gorilla).